Reading from the N-terminus, the 73-residue chain is Neutrophil elastase 2B (73 aa).

A Peptidase S1 domain is found at 1 to 73 (IVGGRPARPH…SGGPLVCNGL (73 aa)). Residue serine 64 is the Charge relay system of the active site.

Belongs to the peptidase S1 family. Elastase subfamily.

In terms of biological role, may be involved in the degradation of connective tissue in chronic lung disease. This Equus caballus (Horse) protein is Neutrophil elastase 2B.